A 142-amino-acid chain; its full sequence is uncharacterized protein (142 aa).

Residues 1–31 are disordered; it reads MSLPKKKKPEVEEEEKPEEEEEKEEEQEIDI. Residues 11–29 show a composition bias toward acidic residues; the sequence is VEEEEKPEEEEEKEEEQEI.

This is an uncharacterized protein from Acidianus sp. F28 (AFV-2).